Here is an 876-residue protein sequence, read N- to C-terminus: Alanine--tRNA ligase (876 aa).

An N6-acetyllysine modification is found at K74. Zn(2+)-binding residues include H564, H568, C666, and H670.

It belongs to the class-II aminoacyl-tRNA synthetase family. As to quaternary structure, homotetramer. Requires Zn(2+) as cofactor.

It localises to the cytoplasm. The catalysed reaction is tRNA(Ala) + L-alanine + ATP = L-alanyl-tRNA(Ala) + AMP + diphosphate. Its function is as follows. Catalyzes the attachment of alanine to tRNA(Ala) in a two-step reaction: alanine is first activated by ATP to form Ala-AMP and then transferred to the acceptor end of tRNA(Ala). Also edits incorrectly charged Ser-tRNA(Ala) and Gly-tRNA(Ala) via its editing domain. This chain is Alanine--tRNA ligase, found in Escherichia coli (strain ATCC 8739 / DSM 1576 / NBRC 3972 / NCIMB 8545 / WDCM 00012 / Crooks).